The sequence spans 135 residues: UPF0251 protein Hore_18270 (135 aa).

The protein belongs to the UPF0251 family.

This chain is UPF0251 protein Hore_18270, found in Halothermothrix orenii (strain H 168 / OCM 544 / DSM 9562).